A 187-amino-acid polypeptide reads, in one-letter code: GTP cyclohydrolase 1 (187 aa).

3 residues coordinate Zn(2+): Cys76, His79, and Cys148.

It belongs to the GTP cyclohydrolase I family. As to quaternary structure, toroid-shaped homodecamer, composed of two pentamers of five dimers.

The enzyme catalyses GTP + H2O = 7,8-dihydroneopterin 3'-triphosphate + formate + H(+). The protein operates within cofactor biosynthesis; 7,8-dihydroneopterin triphosphate biosynthesis; 7,8-dihydroneopterin triphosphate from GTP: step 1/1. In Streptococcus thermophilus (strain CNRZ 1066), this protein is GTP cyclohydrolase 1.